The chain runs to 950 residues: Protocadherin alpha-6 (950 aa).

An N-terminal signal peptide occupies residues M1–G29. Residues Q30–N697 lie on the Extracellular side of the membrane. Cadherin domains are found at residues S34 to F133, A157 to F242, E243 to I350, A351 to F455, A456 to L565, and V581 to A678. N257, N265, N386, and N548 each carry an N-linked (GlcNAc...) asparagine glycan. A helical membrane pass occupies residues V698–Y718. The Cytoplasmic portion of the chain corresponds to T719–Q950. 4 PXXP repeats span residues P799–P802, P832–P835, P873–P876, and P891–P894. Residues P799–P894 are 4 X 4 AA repeats of P-X-X-P. The interval A830–I889 is disordered. Residues Q901–Q950 form a disordered region. Over residues D909–K923 the composition is skewed to basic and acidic residues.

It is found in the cell membrane. In terms of biological role, potential calcium-dependent cell-adhesion protein. May be involved in the establishment and maintenance of specific neuronal connections in the brain. The sequence is that of Protocadherin alpha-6 (PCDHA6) from Pan troglodytes (Chimpanzee).